Here is an 874-residue protein sequence, read N- to C-terminus: Alanine--tRNA ligase (874 aa).

Histidine 562, histidine 566, cysteine 664, and histidine 668 together coordinate Zn(2+).

Belongs to the class-II aminoacyl-tRNA synthetase family. Zn(2+) serves as cofactor.

It is found in the cytoplasm. The enzyme catalyses tRNA(Ala) + L-alanine + ATP = L-alanyl-tRNA(Ala) + AMP + diphosphate. In terms of biological role, catalyzes the attachment of alanine to tRNA(Ala) in a two-step reaction: alanine is first activated by ATP to form Ala-AMP and then transferred to the acceptor end of tRNA(Ala). Also edits incorrectly charged Ser-tRNA(Ala) and Gly-tRNA(Ala) via its editing domain. This is Alanine--tRNA ligase from Shewanella putrefaciens (strain CN-32 / ATCC BAA-453).